Reading from the N-terminus, the 120-residue chain is UPF0102 protein FRAAL5785 (120 aa).

The protein belongs to the UPF0102 family.

The protein is UPF0102 protein FRAAL5785 of Frankia alni (strain DSM 45986 / CECT 9034 / ACN14a).